The chain runs to 132 residues: Interleukin-5 (132 aa).

A signal peptide spans 1–19; it reads MRMLLCLNVLTLSCVWAIA. N-linked (GlcNAc...) asparagine glycosylation is found at Asn-45, Asn-74, and Asn-88.

This sequence belongs to the IL-5 family. In terms of assembly, homodimer; disulfide-linked. Interacts with IL5RA. Interacts with CSF2RB.

The protein localises to the secreted. Its function is as follows. Homodimeric cytokine expressed predominantly by T-lymphocytes and NK cells that plays an important role in the survival, differentiation, and chemotaxis of eosinophils. Acts also on activated and resting B-cells to induce immunoglobulin production, growth, and differentiation. Mechanistically, exerts its biological effects through a receptor composed of IL5RA subunit and the cytokine receptor common subunit beta/CSF2RB. Binding to the receptor leads to activation of various kinases including LYN, SYK and JAK2 and thereby propagates signals through the RAS-MAPK and JAK-STAT5 pathways respectively. This chain is Interleukin-5 (Il5), found in Rattus norvegicus (Rat).